Consider the following 142-residue polypeptide: Large ribosomal subunit protein uL11 (142 aa).

This sequence belongs to the universal ribosomal protein uL11 family. Part of the ribosomal stalk of the 50S ribosomal subunit. Interacts with L10 and the large rRNA to form the base of the stalk. L10 forms an elongated spine to which L12 dimers bind in a sequential fashion forming a multimeric L10(L12)X complex. In terms of processing, one or more lysine residues are methylated.

In terms of biological role, forms part of the ribosomal stalk which helps the ribosome interact with GTP-bound translation factors. This chain is Large ribosomal subunit protein uL11, found in Tolumonas auensis (strain DSM 9187 / NBRC 110442 / TA 4).